A 44-amino-acid polypeptide reads, in one-letter code: Homeobox protein DLX-1 (44 aa).

The interval 19-44 is disordered; that stretch reads RALSAGSPPVPPGWNRIPPLGRAQEE.

This sequence belongs to the distal-less homeobox family. As to quaternary structure, interacts with SMAD4 (via homeobox DNA-binding domain). Interacts (via homeobox DNA-binding domain) with POU4F2; this interaction suppresses DLX1-mediated transcriptional activity in postnatal retina and enhances retinal ganglion cell (RGC) differentiation.

The protein localises to the nucleus. Functionally, plays a role as a transcriptional activator or repressor. Inhibits several cytokine signaling pathways, such as TGFB1, activin-A/INHBA and BMP4 by interfering with the transcriptional stimulatory activity of transcription factors, such as MSX2, FAST2, SMAD2 and SMAD3 during hematopoietic cell differentiation. Plays a role in terminal differentiation of interneurons, such as amacrine and bipolar cells in the developing retina. Likely to play a regulatory role in the development of the ventral forebrain. May play a role in craniofacial patterning and morphogenesis and may be involved in the early development of diencephalic subdivisions. The polypeptide is Homeobox protein DLX-1 (Dlx1) (Rattus norvegicus (Rat)).